The primary structure comprises 244 residues: Carbonic anhydrase (244 aa).

The N-terminal stretch at 1-19 (MKGKFSIALMLSACFSASA) is a signal peptide. An Alpha-carbonic anhydrase domain is found at 23-244 (VHWGYEGSGD…QPLNGRIIIH (222 aa)). A disulfide bridge connects residues Cys-46 and Cys-199. His-84 serves as the catalytic Proton acceptor. Zn(2+) contacts are provided by His-109, His-111, and His-128. 195-196 (TT) is a substrate binding site.

It belongs to the alpha-carbonic anhydrase family. It depends on Zn(2+) as a cofactor.

Its subcellular location is the periplasm. It catalyses the reaction hydrogencarbonate + H(+) = CO2 + H2O. In terms of biological role, reversible hydration of carbon dioxide. This is Carbonic anhydrase (cah) from Pectobacterium atrosepticum (strain SCRI 1043 / ATCC BAA-672) (Erwinia carotovora subsp. atroseptica).